The chain runs to 143 residues: D-aminoacyl-tRNA deacylase (143 aa).

A Gly-cisPro motif, important for rejection of L-amino acids motif is present at residues 135–136; sequence GP.

This sequence belongs to the DTD family. In terms of assembly, homodimer.

The protein resides in the cytoplasm. It catalyses the reaction glycyl-tRNA(Ala) + H2O = tRNA(Ala) + glycine + H(+). It carries out the reaction a D-aminoacyl-tRNA + H2O = a tRNA + a D-alpha-amino acid + H(+). An aminoacyl-tRNA editing enzyme that deacylates mischarged D-aminoacyl-tRNAs. Also deacylates mischarged glycyl-tRNA(Ala), protecting cells against glycine mischarging by AlaRS. Acts via tRNA-based rather than protein-based catalysis; rejects L-amino acids rather than detecting D-amino acids in the active site. By recycling D-aminoacyl-tRNA to D-amino acids and free tRNA molecules, this enzyme counteracts the toxicity associated with the formation of D-aminoacyl-tRNA entities in vivo and helps enforce protein L-homochirality. In Mycolicibacterium gilvum (strain PYR-GCK) (Mycobacterium gilvum (strain PYR-GCK)), this protein is D-aminoacyl-tRNA deacylase.